Here is a 363-residue protein sequence, read N- to C-terminus: DNA primase small subunit PriS (363 aa).

Residues aspartate 105, aspartate 107, and aspartate 265 contribute to the active site.

It belongs to the eukaryotic-type primase small subunit family. In terms of assembly, heterodimer of a small subunit (PriS) and a large subunit (PriL). Requires Mg(2+) as cofactor. Mn(2+) is required as a cofactor.

Its function is as follows. Catalytic subunit of DNA primase, an RNA polymerase that catalyzes the synthesis of short RNA molecules used as primers for DNA polymerase during DNA replication. The small subunit contains the primase catalytic core and has DNA synthesis activity on its own. Binding to the large subunit stabilizes and modulates the activity, increasing the rate of DNA synthesis while decreasing the length of the DNA fragments, and conferring RNA synthesis capability. The DNA polymerase activity may enable DNA primase to also catalyze primer extension after primer synthesis. May also play a role in DNA repair. This is DNA primase small subunit PriS from Methanococcus maripaludis (strain C7 / ATCC BAA-1331).